The sequence spans 111 residues: Ribosome-binding factor A (111 aa).

It belongs to the RbfA family. As to quaternary structure, monomer. Binds 30S ribosomal subunits, but not 50S ribosomal subunits or 70S ribosomes.

It localises to the cytoplasm. Functionally, one of several proteins that assist in the late maturation steps of the functional core of the 30S ribosomal subunit. Associates with free 30S ribosomal subunits (but not with 30S subunits that are part of 70S ribosomes or polysomes). Required for efficient processing of 16S rRNA. May interact with the 5'-terminal helix region of 16S rRNA. This Helicobacter pylori (strain G27) protein is Ribosome-binding factor A.